Consider the following 295-residue polypeptide: 4-diphosphocytidyl-2-C-methyl-D-erythritol kinase (295 aa).

Residue K15 is part of the active site. 101–111 (PIAAGLGGGSS) is a binding site for ATP. The active site involves D143.

Belongs to the GHMP kinase family. IspE subfamily.

The enzyme catalyses 4-CDP-2-C-methyl-D-erythritol + ATP = 4-CDP-2-C-methyl-D-erythritol 2-phosphate + ADP + H(+). Its pathway is isoprenoid biosynthesis; isopentenyl diphosphate biosynthesis via DXP pathway; isopentenyl diphosphate from 1-deoxy-D-xylulose 5-phosphate: step 3/6. Its function is as follows. Catalyzes the phosphorylation of the position 2 hydroxy group of 4-diphosphocytidyl-2C-methyl-D-erythritol. This chain is 4-diphosphocytidyl-2-C-methyl-D-erythritol kinase, found in Caulobacter vibrioides (strain ATCC 19089 / CIP 103742 / CB 15) (Caulobacter crescentus).